The chain runs to 227 residues: Urease accessory protein UreF (227 aa).

The protein belongs to the UreF family. UreD, UreF and UreG form a complex that acts as a GTP-hydrolysis-dependent molecular chaperone, activating the urease apoprotein by helping to assemble the nickel containing metallocenter of UreC. The UreE protein probably delivers the nickel.

The protein resides in the cytoplasm. In terms of biological role, required for maturation of urease via the functional incorporation of the urease nickel metallocenter. The protein is Urease accessory protein UreF of Methylobacillus flagellatus (strain ATCC 51484 / DSM 6875 / VKM B-1610 / KT).